Consider the following 684-residue polypeptide: Chaperone protein HtpG (684 aa).

An a; substrate-binding region spans residues 1 to 329 (MSKKGTIGVT…SPDIPLNVSR (329 aa)). The tract at residues 330-548 (SYLQSDANVK…FMRRMRDMAQ (219 aa)) is b. The c stretch occupies residues 549 to 684 (LQPGMSFYGE…EFIRRSQRLL (136 aa)).

This sequence belongs to the heat shock protein 90 family. As to quaternary structure, homodimer.

The protein localises to the cytoplasm. Its function is as follows. Molecular chaperone. Has ATPase activity. The chain is Chaperone protein HtpG from Porphyromonas gingivalis (strain ATCC BAA-308 / W83).